The chain runs to 174 residues: Early E1A protein (174 aa).

Residues 40-48 (PSLHDLFDL) are interaction with RB1 in competition with E2F1. The LXCXE motif, interaction with host RB1 motif lies at 106–110 (LLCLE). The segment at 145-163 (CLRCAYYQEQGENSICGLC) is a zinc-finger region.

The protein belongs to the adenoviridae E1A protein family. As to quaternary structure, interacts with host UBE2I; this interaction interferes with polySUMOylation. Interacts with host RB1; this interaction induces the aberrant dissociation of RB1-E2F1 complex thereby disrupting the activity of RB1 and activating E2F1-regulated genes. Interacts with host ATF7; the interaction enhances ATF7-mediated viral transactivation activity which requires the zinc binding domains of both proteins. Isoform early E1A 32 kDa protein and isoform early E1A 26 kDa protein interact (via N-terminus) with CUL1 and E3 ubiquitin ligase RBX1; these interactions inhibit RBX1-CUL1-dependent elongation reaction of ubiquitin chains and attenuate ubiquitination of SCF(FBXW7) target proteins. Interacts (via PXLXP motif) with host ZMYND11/BS69 (via MYND-type zinc finger); this interaction inhibits E1A mediated transactivation. Interacts with host EP300; this interaction stimulates the acetylation of RB1 by recruiting EP300 and RB1 into a multimeric-protein complex. Interacts with host CTBP1 and CTBP2; this interaction seems to potentiate viral replication. Interacts with host DCAF7. Interacts with host DYRK1A. Interacts with host KPNA4; this interaction allows E1A import into the host nucleus. Interacts with host EP400; this interaction stabilizes MYC. Interacts with host TBP protein; this interaction probably disrupts the TBP-TATA complex.

The protein localises to the host nucleus. Its function is as follows. Plays a role in viral genome replication by driving entry of quiescent cells into the cell cycle. Stimulation of progression from G1 to S phase allows the virus to efficiently use the cellular DNA replicating machinery to achieve viral genome replication. E1A protein has both transforming and trans-activating activities. Induces the disassembly of the E2F1 transcription factor from RB1 by direct competition for the same binding site on RB1, with subsequent transcriptional activation of E2F1-regulated S-phase genes and of the E2 region of the adenoviral genome. Release of E2F1 leads to the ARF-mediated inhibition of MDM2 and causes TP53/p53 to accumulate because it is not targeted for degradation by MDM2-mediated ubiquitination anymore. This increase in TP53, in turn, would arrest the cell proliferation and direct its death but this effect is counteracted by the viral protein E1B-55K. Inactivation of the ability of RB1 to arrest the cell cycle is critical for cellular transformation, uncontrolled cellular growth and proliferation induced by viral infection. Interaction with RBX1 and CUL1 inhibits ubiquitination of the proteins targeted by SCF(FBXW7) ubiquitin ligase complex, and may be linked to unregulated host cell proliferation. The tumorigenesis-restraining activity of E1A may be related to the disruption of the host CtBP-CtIP complex through the CtBP binding motif. In Canine adenovirus serotype 1 (strain RI261) (CAdV-1), this protein is Early E1A protein.